The following is a 261-amino-acid chain: MSRYTRPPNTSLFIRNVADATRPEDLRREFGRYGPIVDVYIPLDFYTRRPRGFAYVQFEDVRDAEDALYNLNRKWVCGRQIEIQFAQGDRKTPGQMKSKERHPCSPSDHRRSRSPSQRRTRSRSSSWGRNRRRSDSLKESRHRRFSYSQSKSRSKSLPRRSTSARQSRTPRRNFGSRGRSRSKSLQKRSKSIGKSQSSSPQKQTSSGTKSRSHGRHSDSIARSPCKSPKGYTNSETKVQTAKHSHFRSHSRSRSYRHKNSW.

The RRM domain occupies 10-88 (TSLFIRNVAD…RQIEIQFAQG (79 aa)). The disordered stretch occupies residues 86–261 (AQGDRKTPGQ…SRSYRHKNSW (176 aa)). The span at 88–109 (GDRKTPGQMKSKERHPCSPSDH) shows a compositional bias: basic and acidic residues. 2 stretches are compositionally biased toward basic residues: residues 110-122 (RRSR…RTRS) and 178-191 (GRSR…RSKS). Low complexity predominate over residues 192 to 209 (IGKSQSSSPQKQTSSGTK). The segment covering 230–239 (GYTNSETKVQ) has biased composition (polar residues). The span at 240–261 (TAKHSHFRSHSRSRSYRHKNSW) shows a compositional bias: basic residues.

This sequence belongs to the splicing factor SR family. In terms of tissue distribution, expressed in testis.

It is found in the nucleus. Functionally, splicing factor that seems to antagonize SR proteins in pre-mRNA splicing regulation. In Homo sapiens (Human), this protein is Serine/arginine-rich splicing factor 12 (SRSF12).